We begin with the raw amino-acid sequence, 935 residues long: 2-oxoglutarate dehydrogenase E1 component (935 aa).

This sequence belongs to the alpha-ketoglutarate dehydrogenase family. In terms of assembly, homodimer. Part of the 2-oxoglutarate dehydrogenase (OGDH) complex composed of E1 (2-oxoglutarate dehydrogenase), E2 (dihydrolipoamide succinyltransferase) and E3 (dihydrolipoamide dehydrogenase); the complex contains multiple copies of the three enzymatic components (E1, E2 and E3). Thiamine diphosphate serves as cofactor.

It carries out the reaction N(6)-[(R)-lipoyl]-L-lysyl-[protein] + 2-oxoglutarate + H(+) = N(6)-[(R)-S(8)-succinyldihydrolipoyl]-L-lysyl-[protein] + CO2. Functionally, E1 component of the 2-oxoglutarate dehydrogenase (OGDH) complex which catalyzes the decarboxylation of 2-oxoglutarate, the first step in the conversion of 2-oxoglutarate to succinyl-CoA and CO(2). The chain is 2-oxoglutarate dehydrogenase E1 component (sucA) from Haemophilus influenzae (strain ATCC 51907 / DSM 11121 / KW20 / Rd).